Reading from the N-terminus, the 123-residue chain is Protein Wnt-3a (123 aa).

Serine 1 carries O-palmitoleoyl serine lipidation. A disulfide bridge connects residues cysteine 89 and cysteine 104. N-linked (GlcNAc...) asparagine glycosylation is present at asparagine 90.

It belongs to the Wnt family. In terms of processing, disulfide bonds have critical and distinct roles in secretion and activity. Loss of each conserved cysteine results in high molecular weight oxidized Wnt oligomers, which are formed through inter-Wnt disulfide bonding. Palmitoleoylation is required for efficient binding to frizzled receptors. Depalmitoleoylation leads to Wnt signaling pathway inhibition.

It is found in the secreted. The protein localises to the extracellular space. The protein resides in the extracellular matrix. Functionally, ligand for members of the frizzled family of seven transmembrane receptors. Functions in the canonical Wnt signaling pathway that results in activation of transcription factors of the TCF/LEF family. Required for normal embryonic mesoderm development and formation of caudal somites. Required for normal morphogenesis of the developing neural tube. The chain is Protein Wnt-3a (WNT3A) from Meleagris gallopavo (Wild turkey).